The sequence spans 443 residues: Tubulin beta-1 chain (443 aa).

Glutamine 11, glutamate 69, serine 138, glycine 142, threonine 143, glycine 144, asparagine 204, and asparagine 226 together coordinate GTP. Glutamate 69 is a Mg(2+) binding site. The interval 424 to 443 is disordered; it reads QYQDATAEREGEYEEDYDEA. Over residues 434-443 the composition is skewed to acidic residues; sequence GEYEEDYDEA.

It belongs to the tubulin family. Dimer of alpha and beta chains. A typical microtubule is a hollow water-filled tube with an outer diameter of 25 nm and an inner diameter of 15 nM. Alpha-beta heterodimers associate head-to-tail to form protofilaments running lengthwise along the microtubule wall with the beta-tubulin subunit facing the microtubule plus end conferring a structural polarity. Microtubules usually have 13 protofilaments but different protofilament numbers can be found in some organisms and specialized cells. The cofactor is Mg(2+).

It localises to the cytoplasm. The protein resides in the cytoskeleton. Its function is as follows. Tubulin is the major constituent of microtubules, a cylinder consisting of laterally associated linear protofilaments composed of alpha- and beta-tubulin heterodimers. Microtubules grow by the addition of GTP-tubulin dimers to the microtubule end, where a stabilizing cap forms. Below the cap, tubulin dimers are in GDP-bound state, owing to GTPase activity of alpha-tubulin. The sequence is that of Tubulin beta-1 chain (TUBB1) from Anemia phyllitidis (Fern).